The following is a 472-amino-acid chain: ATP synthase subunit beta (472 aa).

Residue 150 to 157 (GGAGVGKT) coordinates ATP.

It belongs to the ATPase alpha/beta chains family. In terms of assembly, F-type ATPases have 2 components, CF(1) - the catalytic core - and CF(0) - the membrane proton channel. CF(1) has five subunits: alpha(3), beta(3), gamma(1), delta(1), epsilon(1). CF(0) has four main subunits: a, b, b' and c.

Its subcellular location is the cellular chromatophore membrane. The catalysed reaction is ATP + H2O + 4 H(+)(in) = ADP + phosphate + 5 H(+)(out). Produces ATP from ADP in the presence of a proton gradient across the membrane. The catalytic sites are hosted primarily by the beta subunits. In Rhodobacter capsulatus (Rhodopseudomonas capsulata), this protein is ATP synthase subunit beta.